Consider the following 307-residue polypeptide: Thiamine-monophosphate kinase (307 aa).

Mg(2+) contacts are provided by Asp-26, Thr-37, Thr-38, and Asp-39. Residue His-46 coordinates substrate. Positions 68 and 117 each coordinate Mg(2+). ATP-binding positions include 116–117 (GD) and Arg-140. Position 207 (Asp-207) interacts with Mg(2+). Thr-209 contacts ATP. Asp-210 provides a ligand contact to Mg(2+). Glu-254 and Phe-304 together coordinate substrate.

Belongs to the thiamine-monophosphate kinase family.

It catalyses the reaction thiamine phosphate + ATP = thiamine diphosphate + ADP. The protein operates within cofactor biosynthesis; thiamine diphosphate biosynthesis; thiamine diphosphate from thiamine phosphate: step 1/1. Catalyzes the ATP-dependent phosphorylation of thiamine-monophosphate (TMP) to form thiamine-pyrophosphate (TPP), the active form of vitamin B1. The chain is Thiamine-monophosphate kinase from Leptospira interrogans serogroup Icterohaemorrhagiae serovar Lai (strain 56601).